Reading from the N-terminus, the 37-residue chain is Cytochrome b6-f complex subunit 5 (37 aa).

The chain crosses the membrane as a helical span at residues 5–25 (FLFGIVLGLIPITLAGLFVTA).

It belongs to the PetG family. In terms of assembly, the 4 large subunits of the cytochrome b6-f complex are cytochrome b6, subunit IV (17 kDa polypeptide, PetD), cytochrome f and the Rieske protein, while the 4 small subunits are PetG, PetL, PetM and PetN. The complex functions as a dimer.

The protein resides in the plastid. Its subcellular location is the chloroplast thylakoid membrane. In terms of biological role, component of the cytochrome b6-f complex, which mediates electron transfer between photosystem II (PSII) and photosystem I (PSI), cyclic electron flow around PSI, and state transitions. PetG is required for either the stability or assembly of the cytochrome b6-f complex. In Solanum lycopersicum (Tomato), this protein is Cytochrome b6-f complex subunit 5.